The following is a 300-amino-acid chain: Solute carrier family 25 member 35 (300 aa).

3 Solcar repeats span residues methionine 1 to glycine 90, histidine 100 to leucine 193, and glutamine 203 to leucine 294. The next 6 helical transmembrane spans lie at threonine 38–glycine 58, leucine 59–isoleucine 79, glycine 91–leucine 119, alanine 169–threonine 190, tryptophan 205–proline 225, and leucine 277–lysine 300.

This sequence belongs to the mitochondrial carrier (TC 2.A.29) family.

It is found in the mitochondrion inner membrane. It catalyses the reaction a dicarboxylate(in) + sulfate(out) = a dicarboxylate(out) + sulfate(in). Its function is as follows. Putative antiporter that exchanges dicarboxylates and sulfur oxoanions across the inner membrane of mitochondria. The polypeptide is Solute carrier family 25 member 35 (SLC25A35) (Homo sapiens (Human)).